A 119-amino-acid chain; its full sequence is Na(+)/H(+) antiporter subunit G (119 aa).

3 helical membrane-spanning segments follow: residues 7 to 29, 44 to 61, and 66 to 88; these read IISI…IIRF, TLGV…FFLV, and VGKL…MMMG.

It belongs to the CPA3 antiporters (TC 2.A.63) subunit G family. As to quaternary structure, forms a heterooligomeric complex that consists of seven subunits: MrpA, MrpB, MrpC, MrpD, MrpE, MrpF and MrpG.

Its subcellular location is the cell membrane. Its function is as follows. Mnh complex is a Na(+)Li(+)/H(+) antiporter involved in Na(+) and/or Li(+) excretion and Na(+) resistance. Na(+)/H(+) antiport consumes a transmembrane electrical potential, and is thus inferred to be electrogenic. Does not transport K(+), Ca(2+) or Mg(2+). The sequence is that of Na(+)/H(+) antiporter subunit G (mrpG) from Alkalihalophilus pseudofirmus (strain ATCC BAA-2126 / JCM 17055 / OF4) (Bacillus pseudofirmus).